A 128-amino-acid chain; its full sequence is Sulfurtransferase TusD (128 aa).

The Cysteine persulfide intermediate role is filled by Cys78.

Belongs to the DsrE/TusD family. In terms of assembly, heterohexamer, formed by a dimer of trimers. The hexameric TusBCD complex contains 2 copies each of TusB, TusC and TusD. The TusBCD complex interacts with TusE.

The protein resides in the cytoplasm. In terms of biological role, part of a sulfur-relay system required for 2-thiolation of 5-methylaminomethyl-2-thiouridine (mnm(5)s(2)U) at tRNA wobble positions. Accepts sulfur from TusA and transfers it in turn to TusE. The sequence is that of Sulfurtransferase TusD from Cronobacter sakazakii (strain ATCC BAA-894) (Enterobacter sakazakii).